The following is a 101-amino-acid chain: DNA-binding protein TubR (101 aa).

In terms of assembly, homodimer. Dimers bind to DNA, forming a protein-bound filament which may form a helix around the TubZ filament.

Functionally, a DNA-binding protein that is part of the type III plasmid partition system used to ensure correct segregation of the pBM400 plasmid. Binds the plasmid origin of replication, probably cooperatively, forming a ring or short helix with external DNA. Its effect on RNA expression has not been shown. The chain is DNA-binding protein TubR from Priestia megaterium (strain ATCC 12872 / QMB1551) (Bacillus megaterium).